A 453-amino-acid chain; its full sequence is DNA repair protein RadA (453 aa).

The C4-type zinc finger occupies 10 to 27 (CQECGYQSPKYLGRCPNC). 95–102 (GDPGIGKS) provides a ligand contact to ATP. The short motif at 251-255 (KNRFG) is the RadA KNRFG motif element. Residues 350-453 (DAYLKSAGGV…VGQVLKAVFS (104 aa)) are lon-protease-like.

The protein belongs to the RecA family. RadA subfamily.

In terms of biological role, DNA-dependent ATPase involved in processing of recombination intermediates, plays a role in repairing DNA breaks. Stimulates the branch migration of RecA-mediated strand transfer reactions, allowing the 3' invading strand to extend heteroduplex DNA faster. Binds ssDNA in the presence of ADP but not other nucleotides, has ATPase activity that is stimulated by ssDNA and various branched DNA structures, but inhibited by SSB. Does not have RecA's homology-searching function. In Streptococcus pyogenes serotype M6 (strain ATCC BAA-946 / MGAS10394), this protein is DNA repair protein RadA.